The chain runs to 339 residues: Fructose-1,6-bisphosphatase class 1 (339 aa).

4 residues coordinate Mg(2+): E101, D120, L122, and D123. Residues 123 to 126, N215, and K281 contribute to the substrate site; that span reads DGSS. E287 lines the Mg(2+) pocket.

Belongs to the FBPase class 1 family. Homotetramer. Mg(2+) serves as cofactor.

Its subcellular location is the cytoplasm. The catalysed reaction is beta-D-fructose 1,6-bisphosphate + H2O = beta-D-fructose 6-phosphate + phosphate. It functions in the pathway carbohydrate biosynthesis; gluconeogenesis. This chain is Fructose-1,6-bisphosphatase class 1, found in Polynucleobacter necessarius subsp. necessarius (strain STIR1).